The sequence spans 2316 residues: MRILQSFLACVQLLCVCRLDWAYGYYRQQRKLVEEIGWSYTGALNQKNWGKKYPICNSPKQSPINIDEDLTQVNVNLKKLKFQGWEKPSLENTFIHNTGKTVEINLTNDYYLSGGLSEKVFKASKMTFHWGKCNVSSEGSEHSLEGQKFPLEMQIYCFDADRFSSFEETVKGKGRLRALSILFEIGVEENLDYKAIIDGTESVSRFGKQAALDPFILQNLLPNSTDKYYIYNGSLTSPPCTDTVEWIVFKDTVSISESQLAVFCEVLTMQQSGYVMLMDYLQNNFREQQYKFSRQVFSSYTGKEEIHEAVCSSEPENVQADPENYTSLLITWERPRVVYDTMIEKFAVLYQPLEGNDQTKHEFLTDGYQDLGAILNNLIPNMSYVLQIVAICSNGLYGKYSDQLIVDMPTEDAELDLFPELIGTEEIIKEENYGKGNEEDTGLNPGRDSATNQIRKKEPQVSTTTHYNHMGTKYNEAKTNRSPTRGSEFSGKSDVLNTSLNPTSQQVAEFNPEREMSLPSQIGTNLPPHSVEGTSASLNSGSKTLLVFPQMNLSGTAESLNMVSITEYKEVSADLSEEENLLTDFKLDSGADDSSGSSPASSTVPFSTDNLSHGYTSSSDTPEAVTYDVLRPESTRNALEDSAPSGSEESLKDPSLEGSVWFPGSTDLTTQSETGSGREGFLQVNSTDFQVDESRETTETFSPDATASRGPSVTDMEMPHYSTFAYPPTEVTSHAFTPSSRPLDLAPTSNILHSQTTQPVYNGETPLQPSYSSEVFPLVTPLLLDNQTLNTTPAASSSDSALHATPVFPSVGVSFDSILSSYDDAPLLPFSSASFSSDLFHHLHTVSQTLPQVTSAAERDELSLHASLLVAGGDLLLEPSLVQYSDVMSHQVTIHAASDTLEFGSESAVLYKTSMVSQIESPSSDVVMHAYSSGPETSYAIEGSHHVLTVSSSSAIPVHDSVGVADQGSLLINPSHISLPESSFITPTASLLQLPPALSGDGEWSGASSDSELLLPDTDGLRTLNMSSPVSVADFTYTTSVSGDDIKPLSKGEMMYGNETELKMSSFSDMAYPSKSTVVPKMSDIVNKWSESLKETSVSVSSINSVFTESLVYPITKVFDQEISRVPEIIFPVKPTHTASQASGDTWLKPGLSTNSEPALSDTASSEVSHPSTQPLLYEAASPFNTEALLQPSFPASDVDTLLKTALPSGPRDPVLTETPMVEQSSSSVSLPLASESASSKSTLHFTSVPVLNMSPSDVHPTSLQRLTVPHSREEYFEQGLLKSKSPQQVLPSLHSHDEFFQTAHLDISQAYPPKGRHAFATPILSINEPQNTLINRLVYSEDIFMHPEISITDKALTGLPTTVSDVLIATDHSVPLGSGPISMTTVSPNRDDSVTTTKLLLPSKATSKPTHSARSDADLVGGGEDGDDYDDDDYDDIDSDRFPVNKCMSCSPYRESQEKVMNDSDTQESSLVDQSDPISHLLSENTEEENGGTGVTRVDKSPDKSPPPSMLPQKHNDGREDRDIQMGSAVLPHTPGSKAWAVLTSDEESGSGQGTSDSLNDNETSTDFSFPDVNEKDADGVLEADDTGIAPGSPRSSTPSVTSGHSGVSNSSEAEASNSSHESRIGLAEGLESEKKAVIPLVIVSALTFICLVVLVGILIYWRKCFQTAHFYLEDNTSPRVISTPPTPIFPISDDIGAIPIKHFPKHVADLHASNGFTEEFETLKEFYQEVQSCTVDLGITADSSNHPDNKHKNRYVNIVAYDHSRVKLTQLAEKDGKLTDYINANYVDGYNRPKAYIAAQGPLKSTAEDFWRMIWEHNVEVIVMITNLVEKGRRKCDQYWPTDGSEEYGSFLVNQKNVQVLAYYTVRNFTLRNTKIKKGSQKGRSSGRLVTQYHYTQWPDMGVPEYSLPVLAFVRKTAQAKRHAVGPVVVHCSAGVGRTGTYIVLDSMLQQIQHEGTVNIFGFLKHIRSQRNYLVQTEEQYVFIHDTLVEAILSKETEVPDSHIHSYVNTLLIPGPSGKTKLEKQFQLLSQSNILQSDYSTALKQCNREKNRTSSIIPVERSRVGISSLSGEGTDYINASYIMGYYQSNEFIITQHPLLHTIKDFWRMIWDHNAQLVVMIPDGQNMAEDEFVYWPNKDEPINCESFKVTLMSEEHKCLSNEEKLIVQDFILEATQDDYVLEVRHFQCPKWPNPDSPISKTFELISIIKEEAANRDGPMIVHDEHGGVTAGTFCALTTLMHQLEKENSMDVYQVAKMINLMRPGVFTDIEQYQFLYKVVLSLVSTRQEENPSTSLDSNGAALPDGNIAESLESLV.

Residues 1–24 (MRILQSFLACVQLLCVCRLDWAYG) form the signal peptide. Over 25–1637 (YYRQQRKLVE…LAEGLESEKK (1613 aa)) the chain is Extracellular. Residues 36-300 (IGWSYTGALN…KFSRQVFSSY (265 aa)) enclose the Alpha-carbonic anhydrase domain. Intrachain disulfides connect cysteine 56–cysteine 240 and cysteine 133–cysteine 264. 7 N-linked (GlcNAc...) asparagine glycosylation sites follow: asparagine 105, asparagine 134, asparagine 223, asparagine 232, asparagine 324, asparagine 381, and asparagine 497. The Fibronectin type-III domain occupies 314–413 (EPENVQADPE…LIVDMPTEDA (100 aa)). Disordered stretches follow at residues 433–499 (YGKG…LNTS) and 518–537 (LPSQ…TSAS). An N-linked (GlcNAc...) asparagine glycan is attached at asparagine 552. 2 positions are modified to phosphoserine: serine 572 and serine 576. Disordered regions lie at residues 586 to 624 (KLDS…TPEA) and 636 to 720 (RNAL…EMPH). Low complexity predominate over residues 592–602 (DDSSGSSPASS). O-linked (Xyl...) (chondroitin sulfate) serine glycosylation occurs at serine 595. Residues 603–621 (TVPFSTDNLSHGYTSSSDT) show a composition bias toward polar residues. Asparagine 610 carries an N-linked (GlcNAc...) asparagine glycan. Serine 645 carries the post-translational modification Phosphoserine; alternate. Serine 645 carries O-linked (Xyl...) (chondroitin sulfate) serine; alternate glycosylation. The residue at position 647 (serine 647) is a Phosphoserine. The segment covering 666–675 (TDLTTQSETG) has biased composition (polar residues). The N-linked (GlcNAc...) asparagine glycan is linked to asparagine 685. The span at 699-711 (ETFSPDATASRGP) shows a compositional bias: polar residues. The N-linked (GlcNAc...) asparagine glycan is linked to asparagine 786. O-linked (Xyl...) (chondroitin sulfate) serine glycosylation occurs at serine 1005. N-linked (GlcNAc...) asparagine glycosylation is found at asparagine 1025 and asparagine 1058. Disordered stretches follow at residues 1141 to 1172 (QASG…SHPS), 1204 to 1228 (KTAL…SSSS), 1401 to 1521 (LLPS…DGRE), and 1545 to 1622 (TSDE…NSSH). Over residues 1152–1172 (LSTNSEPALSDTASSEVSHPS) the composition is skewed to polar residues. The span at 1401–1413 (LLPSKATSKPTHS) shows a compositional bias: polar residues. The span at 1425–1439 (EDGDDYDDDDYDDID) shows a compositional bias: acidic residues. N-linked (GlcNAc...) asparagine glycosylation occurs at asparagine 1463. Polar residues predominate over residues 1464 to 1478 (DSDTQESSLVDQSDP). Residues serine 1550 and serine 1552 are each glycosylated (O-linked (Xyl...) (chondroitin sulfate) serine). Composition is skewed to polar residues over residues 1555–1569 (GTSD…STDF) and 1595–1609 (PRSS…HSGV). N-linked (GlcNAc...) asparagine glycosylation occurs at asparagine 1563. A compositionally biased stretch (low complexity) spans 1610 to 1621 (SNSSEAEASNSS). N-linked (GlcNAc...) asparagine glycans are attached at residues asparagine 1611 and asparagine 1619. A helical transmembrane segment spans residues 1638–1663 (AVIPLVIVSALTFICLVVLVGILIYW). At 1664–2316 (RKCFQTAHFY…NIAESLESLV (653 aa)) the chain is on the cytoplasmic side. 2 positions are modified to phosphothreonine: threonine 1685 and threonine 1688. Tyrosine-protein phosphatase domains follow at residues 1718–1993 (FTEE…LVEA) and 2024–2283 (LEKQ…VLSL). Substrate-binding positions include aspartate 1902, 1934 to 1940 (CSAGVGR), and glutamine 1978. The Phosphocysteine intermediate role is filled by cysteine 1934. Serine 2056 carries the post-translational modification Phosphoserine.

The protein belongs to the protein-tyrosine phosphatase family. Receptor class 5 subfamily. As to quaternary structure, interacts with tenascin. Interacts with N-CAM and NG-CAM. The carbonic-anhydrase like domain interacts with CNTN1 (contactin). Interacts with PTN. Interaction with PTN promotes formation of homooligomers; oligomerization impairs phosphatase activity. Interacts (via chondroitin sulfate chains) with MDK (via C-terminal); this interaction is inhibited by PTN; this interaction promotes neuronal migration. Nervous tissue specific.

The protein resides in the cell membrane. It localises to the secreted. It catalyses the reaction O-phospho-L-tyrosyl-[protein] + H2O = L-tyrosyl-[protein] + phosphate. Functionally, protein tyrosine phosphatase that negatively regulates oligodendrocyte precursor proliferation in the embryonic spinal cord. Required for normal differentiation of the precursor cells into mature, fully myelinating oligodendrocytes. May play a role in protecting oligondendrocytes against apoptosis. May play a role in the establishment of contextual memory, probably via the dephosphorylation of proteins that are part of important signaling cascades. Isoform 3 (phosphacan), previously designated 3F8 chondroitin sulfate proteoglycan or 3H1 keratan sulfate proteoglycan depending on the glycosylation status, is a soluble nervous tissue-specific proteoglycan. It is synthesized by glia and binds to neurons and to the neural cell adhesion molecules tenascin, N-CAM or NG-CAM but not to laminin and fibronectin. Phosphacan acts as a potent inhibitor of cell adhesion and neurite outgrowth. The protein is Receptor-type tyrosine-protein phosphatase zeta (Ptprz1) of Rattus norvegicus (Rat).